We begin with the raw amino-acid sequence, 441 residues long: Sec-independent protein translocase protein TatCo (441 aa).

The interval 1–185 is disordered; that stretch reads MADEERDAGL…LVGEAPESDQ (185 aa). Positions 13-22 are enriched in acidic residues; it reads ADDETDASDD. Positions 51 to 62 are enriched in basic and acidic residues; sequence TPRDETVTHGSD. Acidic residues predominate over residues 75–104; that stretch reads DNGDDSDSDTDAAPDDADDSATDSDADSDD. Over residues 105–117 the composition is skewed to basic and acidic residues; that stretch reads EPRLLADDEHTSH. 2 stretches are compositionally biased toward acidic residues: residues 122-138 and 164-173; these read TYDD…DPDA and EDADFDDEDV. 6 helical membrane-spanning segments follow: residues 200-220, 276-296, 317-337, 357-377, 395-415, and 416-436; these read LAVV…GADI, VAGL…TYLF, LVLA…AIFA, FNLI…PLFV, RLLF…DPTG, and MAPI…LAAL.

Belongs to the TatC family. As to quaternary structure, forms a complex with TatA.

It localises to the cell membrane. Functionally, part of the twin-arginine translocation (Tat) system that transports large folded proteins containing a characteristic twin-arginine motif in their signal peptide across membranes. This chain is Sec-independent protein translocase protein TatCo, found in Haloferax volcanii (strain ATCC 29605 / DSM 3757 / JCM 8879 / NBRC 14742 / NCIMB 2012 / VKM B-1768 / DS2) (Halobacterium volcanii).